Consider the following 301-residue polypeptide: uncharacterized protein (301 aa).

A signal peptide spans Met-1–Ala-26. Residue Cys-27 is the site of N-palmitoyl cysteine attachment. A lipid anchor (S-diacylglycerol cysteine) is attached at Cys-27. The TNase-like domain occupies Lys-46 to His-243. Residues Asn-64–Lys-136 are disordered. Composition is skewed to basic and acidic residues over residues Ser-67–Asp-95 and Thr-120–Lys-136.

It localises to the cell membrane. This is an uncharacterized protein from Mycoplasma pneumoniae (strain ATCC 29342 / M129 / Subtype 1) (Mycoplasmoides pneumoniae).